Reading from the N-terminus, the 430-residue chain is Carbamoyl phosphate synthase arginine-specific small chain (430 aa).

A mitochondrion-targeting transit peptide spans 1–9; sequence MLSATKRYL. The Glutamine amidotransferase type-1 domain maps to 219-407; that stretch reads HIAVLDCGAK…FDNINVYKKS (189 aa). Cys-296 acts as the Nucleophile in catalysis. Residues His-380 and Glu-382 contribute to the active site.

It belongs to the CarA family. In terms of assembly, heterodimer composed of 2 chains; the small (or glutamine) chain promotes the hydrolysis of glutamine to ammonia, which is used by the large (or ammonia) chain to synthesize carbamoyl phosphate.

Its subcellular location is the mitochondrion matrix. It carries out the reaction hydrogencarbonate + L-glutamine + 2 ATP + H2O = carbamoyl phosphate + L-glutamate + 2 ADP + phosphate + 2 H(+). It catalyses the reaction L-glutamine + H2O = L-glutamate + NH4(+). It functions in the pathway amino-acid biosynthesis; L-arginine biosynthesis; carbamoyl phosphate from bicarbonate: step 1/1. Its function is as follows. Small subunit of the arginine-specific carbamoyl phosphate synthase (CPSase). CPSase catalyzes the formation of carbamoyl phosphate from the ammonia moiety of glutamine, carbonate, and phosphate donated by ATP, the first step of the arginine biosynthetic pathway. The small subunit (glutamine amidotransferase) binds and cleaves glutamine to supply the large subunit with the substrate ammonia. The chain is Carbamoyl phosphate synthase arginine-specific small chain (CPA1) from Candida albicans (strain SC5314 / ATCC MYA-2876) (Yeast).